A 280-amino-acid polypeptide reads, in one-letter code: MAERLLQSMSRVAGRCHPDCVKASDEQEDYHASQNAALVAVNLISSARLILKLDAEFTEYSAQFLMDNAGKEDDPGEVDQQRNQVTTENCLRYLAENVWTKKENGQGGMDQQRPVLTVKDCLELAFKKGLPRREHWAHLGCTFKAPPFACQIPRVPVKGEVVEVKTFDEAFKLLVHQPIGAKLHLFSPQIDNVGEGVYKGLTTGNETHYVGLRDVLIASVEEFEGDSVAIVKICYKKKLSFIKVSLSVRFLSVAHDGDKSKFIAPTGLLVDFCVPRLSIN.

It belongs to the heat induced plant HTT protein family. Expressed in seedlings, leaves, stems, inflorescences and siliques.

The protein resides in the cytoplasm. It is found in the nucleus. Functionally, mediates both basal and acquired thermotolerance. The protein is Protein HEAT-INDUCED TAS1 TARGET 4 of Arabidopsis thaliana (Mouse-ear cress).